We begin with the raw amino-acid sequence, 485 residues long: G2/mitotic-specific cyclin-A1 (485 aa).

Positions 1 to 24 (MRSALSLKPSNGNAAKSQAVNNKN) are disordered. Residues 8 to 24 (KPSNGNAAKSQAVNNKN) show a composition bias toward polar residues.

Belongs to the cyclin family. Cyclin AB subfamily. Expressed in the cell lineages ABarp, C and E as well as the NSM neuroblasts.

Its function is as follows. Involved in the control of the cell cycle after S phase. May bind to and activate cdk-1 and/or cdk-2 to promote cell cycle progression. Necessary for embryogenesis. This Caenorhabditis elegans protein is G2/mitotic-specific cyclin-A1 (cya-1).